We begin with the raw amino-acid sequence, 171 residues long: Translation initiation factor IF-3 (171 aa).

The protein belongs to the IF-3 family. Monomer.

The protein resides in the cytoplasm. Functionally, IF-3 binds to the 30S ribosomal subunit and shifts the equilibrium between 70S ribosomes and their 50S and 30S subunits in favor of the free subunits, thus enhancing the availability of 30S subunits on which protein synthesis initiation begins. The protein is Translation initiation factor IF-3 of Thermus thermophilus (strain ATCC BAA-163 / DSM 7039 / HB27).